Consider the following 415-residue polypeptide: Coiled-coil domain-containing glutamate-rich protein 1 (415 aa).

The segment covering Met-1–Pro-11 has biased composition (basic and acidic residues). 5 disordered regions span residues Met-1–Ser-20, Phe-29–Gly-64, Arg-133–Val-162, Gln-202–Asp-241, and Pro-255–Met-372. 2 stretches are compositionally biased toward basic residues: residues Pro-31–Tyr-46 and Pro-135–Ala-156. 2 coiled-coil regions span residues Glu-197–Ser-224 and Asp-264–Asn-366. A compositionally biased stretch (low complexity) spans Ala-211–Ala-220. A compositionally biased stretch (acidic residues) spans Val-275–Glu-363.

The protein localises to the nucleus. In terms of biological role, regulator of histone epigenetic modifications and chromatin compaction into the sperm head, required for histone-to-protamine (HTP) transition. HTP is a key event in which somatic histones are first replaced by testis-specific histone variants, then transition proteins (TNPs) are incorporated into the spermatid nucleus, and finally protamines (PRMs) replace the TNPs to promote chromatin condensation. The chain is Coiled-coil domain-containing glutamate-rich protein 1 (CCER1) from Bos taurus (Bovine).